We begin with the raw amino-acid sequence, 142 residues long: Hemoglobin subunit alpha (142 aa).

S1 is subject to N-acetylserine. The Globin domain occupies 1–142; that stretch reads SLSDKDKADV…LALALGQKYR (142 aa). Residue H58 coordinates O2. H88 provides a ligand contact to heme b.

It belongs to the globin family. Heterotetramer of two alpha chains and two beta chains. Red blood cells.

Functionally, involved in oxygen transport from gills to the various peripheral tissues. This chain is Hemoglobin subunit alpha (hba), found in Catostomus clarkii (Desert sucker).